The sequence spans 208 residues: Thymidylate kinase (208 aa).

10 to 17 (GLEGAGKT) contacts ATP.

Belongs to the thymidylate kinase family.

It catalyses the reaction dTMP + ATP = dTDP + ADP. Phosphorylation of dTMP to form dTDP in both de novo and salvage pathways of dTTP synthesis. This Actinobacillus pleuropneumoniae serotype 5b (strain L20) protein is Thymidylate kinase.